Reading from the N-terminus, the 236-residue chain is Eukaryotic translation initiation factor 3 subunit J (236 aa).

The tract at residues 1–65 (MADDWESAAD…APAKPKPNKA (65 aa)) is disordered. A compositionally biased stretch (acidic residues) spans 28 to 46 (GEDEDEDIKDSWEDEEEKK). Positions 47–58 (DEEKPTKTEAPA) are enriched in basic and acidic residues.

It belongs to the eIF-3 subunit J family. As to quaternary structure, component of the eukaryotic translation initiation factor 3 (eIF-3) complex. The eIF-3 complex interacts with pix.

The protein resides in the cytoplasm. Its function is as follows. Component of the eukaryotic translation initiation factor 3 (eIF-3) complex, which is involved in protein synthesis of a specialized repertoire of mRNAs and, together with other initiation factors, stimulates binding of mRNA and methionyl-tRNAi to the 40S ribosome. The eIF-3 complex specifically targets and initiates translation of a subset of mRNAs involved in cell proliferation. This Drosophila melanogaster (Fruit fly) protein is Eukaryotic translation initiation factor 3 subunit J.